The chain runs to 23 residues: Coenzyme PQQ synthesis protein A (23 aa).

Residues 15 to 19 (EVTLY) constitute a cross-link (pyrroloquinoline quinone (Glu-Tyr)).

This sequence belongs to the PqqA family.

It participates in cofactor biosynthesis; pyrroloquinoline quinone biosynthesis. Functionally, required for coenzyme pyrroloquinoline quinone (PQQ) biosynthesis. PQQ is probably formed by cross-linking a specific glutamate to a specific tyrosine residue and excising these residues from the peptide. The chain is Coenzyme PQQ synthesis protein A from Colwellia psychrerythraea (strain 34H / ATCC BAA-681) (Vibrio psychroerythus).